A 279-amino-acid polypeptide reads, in one-letter code: Acetyl-coenzyme A carboxylase carboxyl transferase subunit beta (279 aa).

A CoA carboxyltransferase N-terminal domain is found at 23–279 (LWWKCESCGA…LSQILGHLSS (257 aa)). Zn(2+) is bound by residues C27, C30, C46, and C49. The C4-type zinc finger occupies 27–49 (CESCGAMLHKKQVEDHFYTCCEC).

This sequence belongs to the AccD/PCCB family. In terms of assembly, acetyl-CoA carboxylase is a heterohexamer composed of biotin carboxyl carrier protein (AccB), biotin carboxylase (AccC) and two subunits each of ACCase subunit alpha (AccA) and ACCase subunit beta (AccD). Zn(2+) is required as a cofactor.

The protein localises to the cytoplasm. It carries out the reaction N(6)-carboxybiotinyl-L-lysyl-[protein] + acetyl-CoA = N(6)-biotinyl-L-lysyl-[protein] + malonyl-CoA. The protein operates within lipid metabolism; malonyl-CoA biosynthesis; malonyl-CoA from acetyl-CoA: step 1/1. Functionally, component of the acetyl coenzyme A carboxylase (ACC) complex. Biotin carboxylase (BC) catalyzes the carboxylation of biotin on its carrier protein (BCCP) and then the CO(2) group is transferred by the transcarboxylase to acetyl-CoA to form malonyl-CoA. This chain is Acetyl-coenzyme A carboxylase carboxyl transferase subunit beta, found in Prosthecochloris aestuarii (strain DSM 271 / SK 413).